The chain runs to 338 residues: L-serine dehydratase (338 aa).

Lys39 is modified (N6-(pyridoxal phosphate)lysine).

It belongs to the serine/threonine dehydratase family. Requires pyridoxal 5'-phosphate as cofactor.

Its subcellular location is the cytoplasm. The enzyme catalyses L-serine = pyruvate + NH4(+). Its pathway is carbohydrate biosynthesis; gluconeogenesis. The sequence is that of L-serine dehydratase (SDL1) from Saccharomyces cerevisiae (strain AWRI1631) (Baker's yeast).